The primary structure comprises 287 residues: ATP synthase gamma chain (287 aa).

This sequence belongs to the ATPase gamma chain family. F-type ATPases have 2 components, CF(1) - the catalytic core - and CF(0) - the membrane proton channel. CF(1) has five subunits: alpha(3), beta(3), gamma(1), delta(1), epsilon(1). CF(0) has three main subunits: a, b and c.

Its subcellular location is the cell inner membrane. Produces ATP from ADP in the presence of a proton gradient across the membrane. The gamma chain is believed to be important in regulating ATPase activity and the flow of protons through the CF(0) complex. This chain is ATP synthase gamma chain, found in Sodalis glossinidius (strain morsitans).